The sequence spans 120 residues: Large ribosomal subunit protein uL18 (120 aa).

It belongs to the universal ribosomal protein uL18 family. As to quaternary structure, part of the 50S ribosomal subunit; part of the 5S rRNA/L5/L18/L25 subcomplex. Contacts the 5S and 23S rRNAs.

In terms of biological role, this is one of the proteins that bind and probably mediate the attachment of the 5S RNA into the large ribosomal subunit, where it forms part of the central protuberance. The sequence is that of Large ribosomal subunit protein uL18 from Picosynechococcus sp. (strain ATCC 27264 / PCC 7002 / PR-6) (Agmenellum quadruplicatum).